The following is a 437-amino-acid chain: Aminopeptidase W (437 aa).

Residues Cys-70, His-361, and Asn-382 contribute to the active site.

It belongs to the peptidase C1 family.

The protein localises to the cytoplasm. This Lactobacillus delbrueckii subsp. lactis protein is Aminopeptidase W (pepW).